Here is a 139-residue protein sequence, read N- to C-terminus: Nucleoside diphosphate kinase (139 aa).

ATP contacts are provided by Lys-10, Phe-58, Arg-86, Thr-92, Arg-103, and Asn-113. Catalysis depends on His-116, which acts as the Pros-phosphohistidine intermediate.

Belongs to the NDK family. Homotetramer. Mg(2+) serves as cofactor.

The protein resides in the cytoplasm. It carries out the reaction a 2'-deoxyribonucleoside 5'-diphosphate + ATP = a 2'-deoxyribonucleoside 5'-triphosphate + ADP. It catalyses the reaction a ribonucleoside 5'-diphosphate + ATP = a ribonucleoside 5'-triphosphate + ADP. Major role in the synthesis of nucleoside triphosphates other than ATP. The ATP gamma phosphate is transferred to the NDP beta phosphate via a ping-pong mechanism, using a phosphorylated active-site intermediate. The sequence is that of Nucleoside diphosphate kinase from Nitratidesulfovibrio vulgaris (strain ATCC 29579 / DSM 644 / CCUG 34227 / NCIMB 8303 / VKM B-1760 / Hildenborough) (Desulfovibrio vulgaris).